The following is a 109-amino-acid chain: Profilin (109 aa).

The protein belongs to the profilin family. Multimer. Occurs in many kinds of cells as a complex with monomeric actin in a 1:1 ratio.

It localises to the cytoplasm. It is found in the cytoskeleton. In terms of biological role, binds to actin and affects the structure of the cytoskeleton. At high concentrations, profilin prevents the polymerization of actin, whereas it enhances it at low concentrations. By binding to PIP2, it inhibits the formation of IP3 and DG. This Actinidia deliciosa (Kiwi) protein is Profilin.